The sequence spans 467 residues: SVGFKAGVKEYKLTYYTPEYKTKDTDILAAFRVTPQPGVPPEEAGAAVAAESSTGTWTTVWTDGLTSLDRYKGRCYHIEPVPGEKDQYICYVAYPLDLFEEGSVTNMFTSIVGNVFGFKALRALRLEDLRVPPAYIKTFQGPPHGIQVERDKLNKYGRPLLGCTIKPKLGLSAKNYGRAVYECLRGGLDFTKDDENVNSQPFMRWRDRFLFCAEAIFKVQAETGEIKGHYLNATAGTCEEMIKRAVFARELGAPIVMHDYLTGGFTANTSLAHYCRDNGLLLHIHRAMHAVIDRQKNHGIHFRVLAKALRMSGGDHIHSGTVVGKLEGERDITLGFVDLLRDDFIEKDRSRGIYFTQDWVSLPGVLPVASGGIHVWHMPALTEIFGDDSVLQFGGGTLGHPWGNAPGAVANRVALEACVKARNEGRDLASEGNVIIREAAKWSLELSAACEVWKEIRFNFEAVDTLH.

At Lys5 the chain carries N6,N6,N6-trimethyllysine. Positions 114 and 164 each coordinate substrate. Lys166 functions as the Proton acceptor in the catalytic mechanism. Lys168 is a substrate binding site. Mg(2+) contacts are provided by Lys192, Asp194, and Glu195. Lys192 carries the post-translational modification N6-carboxylysine. The Proton acceptor role is filled by His285. Substrate-binding residues include Arg286, His318, and Ser370.

It belongs to the RuBisCO large chain family. Type I subfamily. In terms of assembly, heterohexadecamer of 8 large chains and 8 small chains; disulfide-linked. The disulfide link is formed within the large subunit homodimers. It depends on Mg(2+) as a cofactor. The disulfide bond which can form in the large chain dimeric partners within the hexadecamer appears to be associated with oxidative stress and protein turnover.

It is found in the plastid. It localises to the chloroplast. It catalyses the reaction 2 (2R)-3-phosphoglycerate + 2 H(+) = D-ribulose 1,5-bisphosphate + CO2 + H2O. It carries out the reaction D-ribulose 1,5-bisphosphate + O2 = 2-phosphoglycolate + (2R)-3-phosphoglycerate + 2 H(+). Functionally, ruBisCO catalyzes two reactions: the carboxylation of D-ribulose 1,5-bisphosphate, the primary event in carbon dioxide fixation, as well as the oxidative fragmentation of the pentose substrate in the photorespiration process. Both reactions occur simultaneously and in competition at the same active site. This chain is Ribulose bisphosphate carboxylase large chain, found in Jasminum simplicifolium subsp. suavissimum (Native jasmine).